Consider the following 255-residue polypeptide: Small ribosomal subunit protein eS1 (255 aa).

Basic residues predominate over residues 1-18 (MAVGKNKRLSKGKKGLKK). Residues 1-28 (MAVGKNKRLSKGKKGLKKRTQDPFSRKD) form a disordered region. A2 is subject to N-acetylalanine; partial. Residues 19 to 28 (RTQDPFSRKD) show a composition bias toward basic and acidic residues.

It belongs to the eukaryotic ribosomal protein eS1 family. In terms of assembly, component of the small ribosomal subunit. Mature ribosomes consist of a small (40S) and a large (60S) subunit. The 40S subunit contains about 33 different proteins and 1 molecule of RNA (18S). The 60S subunit contains about 49 different proteins and 3 molecules of RNA (25S, 5.8S and 5S).

It localises to the cytoplasm. This is Small ribosomal subunit protein eS1 from Ajellomyces capsulatus (strain NAm1 / WU24) (Darling's disease fungus).